The primary structure comprises 460 residues: MLSRQFVREHPEKVRDALDAKGVDADLDRILEVDEEWRELKARGDELRHDRNEVSSKIGELKQAGDEDAAQEAIERSQALKDELADVEARADDLEAELERLLLTLPMVPDEDAPVGDSEAENVERRREGFDDRRDLPESVVPHYDLGEELDILDFERGAKVSGGGFYFSKGAGARLEHALVQFMLDVHREQGYEDVFPPMPVSARSMEGTGQFPKFVEDAYRIGGENDADYDDDDLWLLPTAEVPVTNMYRDEILLDDDLPVKHQAYSPNFRREAGEHGTETRGIVRVHQFNKVELVNFVRPEDSAERFHGLLDEAEAVLRRLDLPYRVLEMCTGDMGFTQAKKYDIEVWAPGDDMDGGPEMGGRWLEVSSVSNFKDFQARRADIQYRPERHESAEHLHTLNGSGVAVPRVLVAILEYYQNDDGTVTVPEALQPYMNGQTRIEGSRKVGESALGDGDREA.

The span at 50 to 65 shows a compositional bias: basic and acidic residues; it reads DRNEVSSKIGELKQAG. Disordered stretches follow at residues 50 to 71 and 109 to 129; these read DRNEVSSKIGELKQAGDEDAAQ and PDEDAPVGDSEAENVERRREG. The segment covering 109 to 121 has biased composition (acidic residues); sequence PDEDAPVGDSEAE. L-serine is bound at residue 241 to 243; it reads TAE. ATP-binding positions include 272 to 274 and valine 288; that span reads RRE. Glutamate 295 is an L-serine binding site. Residue 368–371 coordinates ATP; sequence EVSS. Serine 404 contacts L-serine.

The protein belongs to the class-II aminoacyl-tRNA synthetase family. Type-1 seryl-tRNA synthetase subfamily. Homodimer. The tRNA molecule binds across the dimer.

It is found in the cytoplasm. It catalyses the reaction tRNA(Ser) + L-serine + ATP = L-seryl-tRNA(Ser) + AMP + diphosphate + H(+). The enzyme catalyses tRNA(Sec) + L-serine + ATP = L-seryl-tRNA(Sec) + AMP + diphosphate + H(+). It functions in the pathway aminoacyl-tRNA biosynthesis; selenocysteinyl-tRNA(Sec) biosynthesis; L-seryl-tRNA(Sec) from L-serine and tRNA(Sec): step 1/1. In terms of biological role, catalyzes the attachment of serine to tRNA(Ser). Is also able to aminoacylate tRNA(Sec) with serine, to form the misacylated tRNA L-seryl-tRNA(Sec), which will be further converted into selenocysteinyl-tRNA(Sec). This Halobacterium salinarum (strain ATCC 29341 / DSM 671 / R1) protein is Serine--tRNA ligase.